The following is a 134-amino-acid chain: MGRDTIADIITSIRNADMNRKGTIQIASTNITENIVKILLREGFIKNVRKHQENNKYFLVLTLRHRRNRKGPYRTILNLKRISRPGLRIYSNYQRIPRILGGMGIVILSTSRGIMTDREARLEGIGGEILCYIW.

This sequence belongs to the universal ribosomal protein uS8 family. Part of the 30S ribosomal subunit.

The protein resides in the plastid. It localises to the chloroplast. In terms of biological role, one of the primary rRNA binding proteins, it binds directly to 16S rRNA central domain where it helps coordinate assembly of the platform of the 30S subunit. The sequence is that of Small ribosomal subunit protein uS8c (rps8) from Eucalyptus globulus subsp. globulus (Tasmanian blue gum).